A 337-amino-acid chain; its full sequence is Ornithine carbamoyltransferase (337 aa).

Carbamoyl phosphate contacts are provided by residues 57-60 (STRT), Gln-84, Arg-108, and 135-138 (HPTQ). Residues Asn-167, Asp-231, and 235 to 236 (SM) each bind L-ornithine. Carbamoyl phosphate contacts are provided by residues 272 to 273 (CL) and Arg-317.

The protein belongs to the aspartate/ornithine carbamoyltransferase superfamily. OTCase family.

The protein resides in the cytoplasm. It catalyses the reaction carbamoyl phosphate + L-ornithine = L-citrulline + phosphate + H(+). Its pathway is amino-acid degradation; L-arginine degradation via ADI pathway; carbamoyl phosphate from L-arginine: step 2/2. Reversibly catalyzes the transfer of the carbamoyl group from carbamoyl phosphate (CP) to the N(epsilon) atom of ornithine (ORN) to produce L-citrulline. In Streptococcus equi subsp. equi (strain 4047), this protein is Ornithine carbamoyltransferase.